A 418-amino-acid chain; its full sequence is 26S proteasome regulatory subunit 6B (418 aa).

Met1 carries the N-acetylmethionine modification. The residue at position 21 (Ser21) is a Phosphoserine. Residue Thr25 is modified to Phosphothreonine. At Ser28 the chain carries Phosphoserine. 206-213 (GPPGCGKT) contacts ATP. N6-acetyllysine is present on residues Lys397 and Lys401.

It belongs to the AAA ATPase family. As to quaternary structure, component of the 19S proteasome regulatory particle complex. The 26S proteasome consists of a 20S core particle (CP) and two 19S regulatory subunits (RP). The regulatory particle is made of a lid composed of 9 subunits, a base containing 6 ATPases including PSMC4 and few additional components. Interacts with NR1I3. Interacts with PAAF1. Interacts with TRIM5. Interacts with ZFAND1.

The protein localises to the cytoplasm. It localises to the nucleus. Component of the 26S proteasome, a multiprotein complex involved in the ATP-dependent degradation of ubiquitinated proteins. This complex plays a key role in the maintenance of protein homeostasis by removing misfolded or damaged proteins, which could impair cellular functions, and by removing proteins whose functions are no longer required. Therefore, the proteasome participates in numerous cellular processes, including cell cycle progression, apoptosis, or DNA damage repair. PSMC4 belongs to the heterohexameric ring of AAA (ATPases associated with diverse cellular activities) proteins that unfolds ubiquitinated target proteins that are concurrently translocated into a proteolytic chamber and degraded into peptides. The protein is 26S proteasome regulatory subunit 6B (Psmc4) of Mus musculus (Mouse).